We begin with the raw amino-acid sequence, 607 residues long: UvrABC system protein C (607 aa).

The region spanning 16–94 (GRPGVYRMFD…IKEWRPPYNI (79 aa)) is the GIY-YIG domain. Positions 203–238 (NALSDELNASMEKAAMALDFERAAELRDQVALLRRV) constitute a UVR domain.

This sequence belongs to the UvrC family. In terms of assembly, interacts with UvrB in an incision complex.

It localises to the cytoplasm. Functionally, the UvrABC repair system catalyzes the recognition and processing of DNA lesions. UvrC both incises the 5' and 3' sides of the lesion. The N-terminal half is responsible for the 3' incision and the C-terminal half is responsible for the 5' incision. The protein is UvrABC system protein C of Pseudomonas syringae pv. syringae (strain B728a).